A 1005-amino-acid chain; its full sequence is Small G protein signaling modulator 2 (1005 aa).

One can recognise an RUN domain in the interval 34–191 (HEDSSHIIAL…EYTKLKTADH (158 aa)). 2 disordered regions span residues 95 to 121 (QAEG…KAPA) and 205 to 236 (HRIR…SASE). Phosphoserine occurs at positions 402 and 444. The Rab-GAP TBC domain maps to 566–938 (GVEHEIRKDV…AVWEVIWAAR (373 aa)). Disordered stretches follow at residues 657–687 (FISV…AGTP) and 729–761 (GFED…QETL). Residues 672 to 681 (EDSKPKREQE) show a composition bias toward basic and acidic residues. Residues 730–740 (FEDDGAGEDGS) are compositionally biased toward acidic residues.

This sequence belongs to the RUTBC family. As to quaternary structure, interacts with RAB4A, RAB11A, RAP1A, RAP1B, RAP2A and RAP2B. No interaction with RAB27A. Interacts with RAB9A. As to expression, widely expressed.

It localises to the cytoplasm. The protein localises to the melanosome. Possesses GTPase activator activity towards RAB32, RAB33B and RAB38. Regulates the trafficking of melanogenic enzymes TYR, TYRP1 and DCT/TYRP2 to melanosomes in melanocytes by inactivating RAB32 and RAB38. Inhibits RAB32 and RAB38 activation both directly by promoting their GTPase activity and indirectly by disrupting the RAB9A-HPS4 interaction which is required for RAB32/38 activation. This chain is Small G protein signaling modulator 2 (Sgsm2), found in Mus musculus (Mouse).